Reading from the N-terminus, the 315-residue chain is Ribose-phosphate pyrophosphokinase (315 aa).

ATP contacts are provided by residues 37–39 and 96–97; these read DGE and RQ. The Mg(2+) site is built by His-131 and Asp-170. Lys-194 is an active-site residue. Residues Arg-196, Asp-220, and 224-228 contribute to the D-ribose 5-phosphate site; that span reads DTGGT.

Belongs to the ribose-phosphate pyrophosphokinase family. Class I subfamily. In terms of assembly, homohexamer. Mg(2+) serves as cofactor.

It is found in the cytoplasm. The enzyme catalyses D-ribose 5-phosphate + ATP = 5-phospho-alpha-D-ribose 1-diphosphate + AMP + H(+). Its pathway is metabolic intermediate biosynthesis; 5-phospho-alpha-D-ribose 1-diphosphate biosynthesis; 5-phospho-alpha-D-ribose 1-diphosphate from D-ribose 5-phosphate (route I): step 1/1. Functionally, involved in the biosynthesis of the central metabolite phospho-alpha-D-ribosyl-1-pyrophosphate (PRPP) via the transfer of pyrophosphoryl group from ATP to 1-hydroxyl of ribose-5-phosphate (Rib-5-P). This is Ribose-phosphate pyrophosphokinase from Yersinia pestis.